The chain runs to 539 residues: GMP synthase [glutamine-hydrolyzing] (539 aa).

The Glutamine amidotransferase type-1 domain occupies Lys4–Asp202. Catalysis depends on Cys81, which acts as the Nucleophile. Active-site residues include His176 and Glu178. Positions Trp203–Arg395 constitute a GMPS ATP-PPase domain. Ser230–Ser236 is an ATP binding site.

In terms of assembly, homodimer.

It catalyses the reaction XMP + L-glutamine + ATP + H2O = GMP + L-glutamate + AMP + diphosphate + 2 H(+). Its pathway is purine metabolism; GMP biosynthesis; GMP from XMP (L-Gln route): step 1/1. Its function is as follows. Catalyzes the synthesis of GMP from XMP. The protein is GMP synthase [glutamine-hydrolyzing] of Burkholderia ambifaria (strain ATCC BAA-244 / DSM 16087 / CCUG 44356 / LMG 19182 / AMMD) (Burkholderia cepacia (strain AMMD)).